The following is a 289-amino-acid chain: Protease HtpX (289 aa).

The next 2 helical transmembrane spans lie at 4–24 (IMLF…VLNI) and 36–56 (LSGL…ISLM). Residue H143 participates in Zn(2+) binding. E144 is a catalytic residue. H147 provides a ligand contact to Zn(2+). 2 helical membrane passes run 158–178 (LMQG…ANIV) and 192–212 (MVYF…ASFL). E221 is a Zn(2+) binding site.

This sequence belongs to the peptidase M48B family. Zn(2+) serves as cofactor.

It localises to the cell inner membrane. The sequence is that of Protease HtpX from Vibrio campbellii (strain ATCC BAA-1116).